Here is a 460-residue protein sequence, read N- to C-terminus: MLO-like protein 9 (460 aa).

The Extracellular segment spans residues 1 to 21 (MAGGGGGGGGEGPRQLDQTPT). The helical transmembrane segment at 22 to 42 (WAVSTVCGVIILISIILELII) threads the bilayer. Residues 43–67 (HKVGEVFERKKKKALFEALEKIKNE) lie on the Cytoplasmic side of the membrane. A helical transmembrane segment spans residues 68 to 88 (LMVLGFISLLLTFGQNYIASI). Over 89 to 158 (CVPSRYGHAM…ISLNALHQVH (70 aa)) the chain is Extracellular. Residues 159 to 179 (IFIFFLAVFHVIYSAITMMLG) traverse the membrane as a helical segment. Over 180 to 289 (RAKIRGWKVW…KVVVGIRPEL (110 aa)) the chain is Cytoplasmic. The helical transmembrane segment at 290 to 310 (WAFVMLFLLFDVHGWYVTAVI) threads the bilayer. Residues 311-315 (TMIPP) lie on the Extracellular side of the membrane. Residues 316 to 336 (LLTLAIGTKLQAIISYMALEI) form a helical membrane-spanning segment. The Cytoplasmic portion of the chain corresponds to 337 to 366 (QERHAVIQGMPVVNVSDQHFWFEKPDLVLH). The helical transmembrane segment at 367-387 (MIHFVLFQNAFEITYFFWIWY) threads the bilayer. Residues 388 to 398 (EFGLRSCFHHH) are Extracellular-facing. A helical transmembrane segment spans residues 399 to 419 (FGLIIIRVCLGVGVQFLCSYI). Topologically, residues 420-460 (TLPLYALVTQMGSTMKRSVFDEQTSKALEQWHKKARKKNEK) are cytoplasmic. The calmodulin-binding stretch occupies residues 441–460 (EQTSKALEQWHKKARKKNEK).

This sequence belongs to the MLO family.

The protein localises to the membrane. May be involved in modulation of pathogen defense and leaf cell death. Activity seems to be regulated by Ca(2+)-dependent calmodulin binding and seems not to require heterotrimeric G proteins. This chain is MLO-like protein 9 (MLO9), found in Arabidopsis thaliana (Mouse-ear cress).